We begin with the raw amino-acid sequence, 264 residues long: Phosphonates import ATP-binding protein PhnC (264 aa).

The 248-residue stretch at 7–254 (LSIRAASKTF…KLIDIYGPEF (248 aa)) folds into the ABC transporter domain. 39 to 46 (GPSGSGKS) contacts ATP.

The protein belongs to the ABC transporter superfamily. Phosphonates importer (TC 3.A.1.9.1) family. As to quaternary structure, the complex is composed of two ATP-binding proteins (PhnC), two transmembrane proteins (PhnE) and a solute-binding protein (PhnD).

It localises to the cell inner membrane. The catalysed reaction is phosphonate(out) + ATP + H2O = phosphonate(in) + ADP + phosphate + H(+). Functionally, part of the ABC transporter complex PhnCDE involved in phosphonates import. Responsible for energy coupling to the transport system. The polypeptide is Phosphonates import ATP-binding protein PhnC (Caulobacter vibrioides (strain ATCC 19089 / CIP 103742 / CB 15) (Caulobacter crescentus)).